A 20-amino-acid polypeptide reads, in one-letter code: AAVPEAAAEATAEAAPVSEF.

The tract at residues 1-20 is disordered; it reads AAVPEAAAEATAEAAPVSEF.

As to quaternary structure, homopentamer. Forms a cylindrical structure with a central pore. In terms of tissue distribution, detected in the hemolymph.

The protein resides in the secreted. The polypeptide is Haemoporin (Aplysia californica (California sea hare)).